The chain runs to 84 residues: Delta-thalatoxin-Tas1a (84 aa).

An N-terminal signal peptide occupies residues 1–19 (MAYLKIVLVALMLVLAVSA). Positions 20–33 (MRRPDQQDQDISVA) are excised as a propeptide. 3 disulfide bridges follow: Cys-38–Cys-78, Cys-40–Cys-68, and Cys-61–Cys-79.

It belongs to the sea anemone sodium channel inhibitory toxin family. Type II subfamily.

It localises to the secreted. Its subcellular location is the nematocyst. Its function is as follows. Binds specifically to the voltage-gated sodium channel (Nav) and delays its inactivation. In Thalassianthus aster (Fuzzy-tipped anemone), this protein is Delta-thalatoxin-Tas1a.